A 79-amino-acid chain; its full sequence is Conotoxin TxMEKL-021 (79 aa).

An N-terminal signal peptide occupies residues 1 to 19 (MEKLTILLLVAVVLMSTQA). The propeptide occupies 20–47 (LPQGGGEKRPRENIRFLSKRKSNAERWR). Cystine bridges form between Cys51/Cys65, Cys58/Cys69, and Cys64/Cys75.

This sequence belongs to the conotoxin O2 superfamily. In terms of tissue distribution, expressed by the venom duct.

The protein resides in the secreted. In Conus textile (Cloth-of-gold cone), this protein is Conotoxin TxMEKL-021.